We begin with the raw amino-acid sequence, 404 residues long: G1/S-specific cyclin-E2 (404 aa).

Residues 1–45 (MSRRSSRLQAKQQPQASQTDSPQEAQIIQAKKRKTAQDVKKRKEE) are disordered. Residues 7–26 (RLQAKQQPQASQTDSPQEAQ) are compositionally biased toward polar residues. Ser21 carries the phosphoserine modification. Positions 35–45 (TAQDVKKRKEE) are enriched in basic and acidic residues. Lys348 is modified (N6-lactoyllysine). At Ser383 the chain carries Phosphoserine. Position 392 is a phosphothreonine (Thr392).

It belongs to the cyclin family. Cyclin E subfamily. As to quaternary structure, interacts with the CDK2 (in vivo) and CDK3 (in vitro) protein kinases to form a serine/threonine kinase holoenzyme complex. The cyclin subunit imparts substrate specificity to the complex. Post-translationally, phosphorylation by CDK2 triggers its release from CDK2 and degradation via the ubiquitin proteasome pathway. Lactylated at Lys-348. Delactylated by SIRT3.

The protein localises to the nucleus. In terms of biological role, essential for the control of the cell cycle at the late G1 and early S phase. This Bos taurus (Bovine) protein is G1/S-specific cyclin-E2 (CCNE2).